Here is a 165-residue protein sequence, read N- to C-terminus: MGDKEGACFMKIAKYLDKALEYLSILALVIMISLVFFNSVLRYFFDSGIAFSEEFSRICFVYMISFGIILVAKDKAHLTVDIIIPALPEQYRKIVLIVANICVLIAMIFIAYGALQLMSLTYTQQMPATGISSSFLYLAAVISAVSYFFIVMFSMIKDYKESSDK.

The next 4 helical transmembrane spans lie at 20–40 (LEYL…FNSV), 51–71 (FSEE…IILV), 94–114 (IVLI…AYGA), and 136–156 (LYLA…FSMI).

It belongs to the TRAP transporter small permease family.

The protein localises to the cell inner membrane. This Haemophilus influenzae (strain ATCC 51907 / DSM 11121 / KW20 / Rd) protein is Putative TRAP transporter small permease protein HI_0051.